We begin with the raw amino-acid sequence, 316 residues long: HTH-type transcriptional regulator cbl (316 aa).

The region spanning 1–59 (MNFQQLKIIREAARQDYNLTEVANMLFTSQSGVSRHIRELEDELGIEIFVRRGKRLLGM) is the HTH lysR-type domain. The H-T-H motif DNA-binding region spans 19–38 (LTEVANMLFTSQSGVSRHIR).

It belongs to the LysR transcriptional regulatory family.

Its function is as follows. May be an accessory regulatory protein within the cys regulon. This Escherichia coli (strain K12) protein is HTH-type transcriptional regulator cbl (cbl).